Here is a 238-residue protein sequence, read N- to C-terminus: DNA repair protein RecO (238 aa).

It belongs to the RecO family.

Its function is as follows. Involved in DNA repair and RecF pathway recombination. The chain is DNA repair protein RecO from Aliivibrio fischeri (strain ATCC 700601 / ES114) (Vibrio fischeri).